The sequence spans 321 residues: MLFATLEHILTHISFSTISIVITIHLITLLVRELRGLRDSSEKGMIATFFSITGFLVSRWVSSGHFPLSNLYESLIFLSWTLYILHTIPKIQNSKNDLSTITTPSTILTQGFATSGLLTEMHQSTILVPALQSQWLMMHVSMMLLSYATLLCGSLLSAALLIIRFRNSFDFFSLKKNVLRKTFFFSEIEYLYAKRSALKNTSFPVFPNYYKYQLTERLDSWSYRVISLGFTLLTVGILCGAVWANEAWGSYWNWDPKETWAFITWTIFAIYLHSRTNPNWKGTNSALVASIGFLIIWICYFGINLLGIGLHSYGSFTLPSK.

7 consecutive transmembrane segments (helical) span residues 9–29 (ILTH…LITL), 44–64 (GMIA…VSSG), 68–88 (LSNL…LHTI), 143–163 (MLLS…LLII), 225–245 (VISL…VWAN), 259–273 (TWAF…IYLH), and 288–308 (VASI…LLGI).

It belongs to the CcmF/CycK/Ccl1/NrfE/CcsA family. As to quaternary structure, may interact with Ccs1.

The protein localises to the plastid. The protein resides in the chloroplast thylakoid membrane. In terms of biological role, required during biogenesis of c-type cytochromes (cytochrome c6 and cytochrome f) at the step of heme attachment. This chain is Cytochrome c biogenesis protein CcsA, found in Saccharum hybrid (Sugarcane).